Here is a 346-residue protein sequence, read N- to C-terminus: 2,5-dichlorohydroquinone reductive dechlorinase (346 aa).

A GST N-terminal domain is found at 43–154 (PRFELFHFVF…YLCDALSGGT (112 aa)). The 147-residue stretch at 189-335 (DRRPESMQAV…AIIQWPGHPP (147 aa)) folds into the GST C-terminal domain.

This sequence belongs to the GST superfamily.

It catalyses the reaction 2,5-dichlorohydroquinone + 2 glutathione = chlorohydroquinone + glutathione disulfide + chloride + H(+). It carries out the reaction chlorohydroquinone + 2 glutathione = hydroquinone + glutathione disulfide + chloride + H(+). Its pathway is xenobiotic degradation; gamma-hexachlorocyclohexane degradation. In terms of biological role, catalyzes the degradation of 2,5-dichlorohydroquinone (2,5-DCHQ) into hydroquinone (HQ) via chlorohydroquinone (CHQ). Is involved in the degradation pathway that allows S.japonicum UT26 to grow on gamma-hexachlorocyclohexane (gamma-HCH or lindane) as the sole source of carbon and energy. However, the conversion of CHQ to HQ by LinD seems not to be essential for this degradation pathway, because the conversion rate of CHQ to HQ is much lower than that of 2,5-DCHQ to CHQ. CHQ is more efficiently degraded by LinE in strain UT26. This is 2,5-dichlorohydroquinone reductive dechlorinase from Sphingobium indicum (strain DSM 16413 / CCM 7287 / MTCC 6362 / UT26 / NBRC 101211 / UT26S) (Sphingobium japonicum).